A 101-amino-acid chain; its full sequence is Gene 30 protein (101 aa).

The protein is Gene 30 protein (30) of Mycobacterium phage L5 (Mycobacteriophage L5).